Consider the following 441-residue polypeptide: Homogentisate 1,2-dioxygenase (441 aa).

Histidine 287 (proton acceptor) is an active-site residue. Fe cation is bound by residues histidine 330 and glutamate 336. Homogentisate is bound by residues tyrosine 345 and histidine 366. A Fe cation-binding site is contributed by histidine 366.

This sequence belongs to the homogentisate dioxygenase family. As to quaternary structure, hexamer; dimer of trimers. Fe cation serves as cofactor.

The catalysed reaction is homogentisate + O2 = 4-maleylacetoacetate + H(+). The protein operates within amino-acid degradation; L-phenylalanine degradation; acetoacetate and fumarate from L-phenylalanine: step 4/6. Its function is as follows. Involved in the catabolism of homogentisate (2,5-dihydroxyphenylacetate or 2,5-OH-PhAc), a central intermediate in the degradation of phenylalanine and tyrosine. Catalyzes the oxidative ring cleavage of the aromatic ring of homogentisate to yield maleylacetoacetate. The sequence is that of Homogentisate 1,2-dioxygenase from Xanthomonas oryzae pv. oryzae (strain KACC10331 / KXO85).